A 179-amino-acid chain; its full sequence is Archaemetzincin (179 aa).

A Zn(2+)-binding site is contributed by H128. E129 serves as the catalytic Proton acceptor. Residues H132, H138, C139, C144, C163, and C166 each coordinate Zn(2+).

The protein belongs to the peptidase M54 family. Monomer. The cofactor is Zn(2+).

Its function is as follows. Probable zinc metalloprotease whose natural substrate is unknown. The protein is Archaemetzincin of Methanocaldococcus jannaschii (strain ATCC 43067 / DSM 2661 / JAL-1 / JCM 10045 / NBRC 100440) (Methanococcus jannaschii).